Consider the following 284-residue polypeptide: Tropomyosin (284 aa).

Residues 1–284 are a coiled coil; sequence MDAIKKKMLA…DQTFAELAGY (284 aa). The span at 202–213 shows a compositional bias: polar residues; it reads NNTKSLEISEQE. The interval 202 to 223 is disordered; sequence NNTKSLEISEQEASQREDSYEE. Over residues 214 to 223 the composition is skewed to basic and acidic residues; it reads ASQREDSYEE.

It belongs to the tropomyosin family. In terms of assembly, homodimer.

Its function is as follows. Tropomyosin, in association with the troponin complex, plays a central role in the calcium dependent regulation of muscle contraction. The polypeptide is Tropomyosin (Haliotis rufescens (California red abalone)).